Consider the following 356-residue polypeptide: DNA polymerase IV (356 aa).

One can recognise a UmuC domain in the interval 6-187 (IIHVDMDYFF…LDIGDFPGVG (182 aa)). Mg(2+) contacts are provided by aspartate 10 and aspartate 105. The active site involves glutamate 106.

Belongs to the DNA polymerase type-Y family. In terms of assembly, monomer. Mg(2+) is required as a cofactor.

The protein resides in the cytoplasm. The enzyme catalyses DNA(n) + a 2'-deoxyribonucleoside 5'-triphosphate = DNA(n+1) + diphosphate. In terms of biological role, poorly processive, error-prone DNA polymerase involved in untargeted mutagenesis. Copies undamaged DNA at stalled replication forks, which arise in vivo from mismatched or misaligned primer ends. These misaligned primers can be extended by PolIV. Exhibits no 3'-5' exonuclease (proofreading) activity. May be involved in translesional synthesis, in conjunction with the beta clamp from PolIII. The polypeptide is DNA polymerase IV (Staphylococcus saprophyticus subsp. saprophyticus (strain ATCC 15305 / DSM 20229 / NCIMB 8711 / NCTC 7292 / S-41)).